The primary structure comprises 100 residues: NADH-quinone oxidoreductase subunit K (100 aa).

3 helical membrane passes run 4–24 (LSHG…GMII), 28–48 (LLFM…AFVV), and 60–80 (VMYI…LALL).

It belongs to the complex I subunit 4L family. In terms of assembly, NDH-1 is composed of 13 different subunits. Subunits NuoA, H, J, K, L, M, N constitute the membrane sector of the complex.

The protein resides in the cell inner membrane. The enzyme catalyses a quinone + NADH + 5 H(+)(in) = a quinol + NAD(+) + 4 H(+)(out). In terms of biological role, NDH-1 shuttles electrons from NADH, via FMN and iron-sulfur (Fe-S) centers, to quinones in the respiratory chain. The immediate electron acceptor for the enzyme in this species is believed to be ubiquinone. Couples the redox reaction to proton translocation (for every two electrons transferred, four hydrogen ions are translocated across the cytoplasmic membrane), and thus conserves the redox energy in a proton gradient. The polypeptide is NADH-quinone oxidoreductase subunit K (Sodalis glossinidius (strain morsitans)).